A 242-amino-acid polypeptide reads, in one-letter code: Type III pantothenate kinase (242 aa).

Position 5 to 12 (5 to 12) interacts with ATP; it reads DLGNTRLK. Substrate contacts are provided by residues Y94 and 100–103; that span reads GCDR. The active-site Proton acceptor is the D102. T124 lines the ATP pocket. T175 provides a ligand contact to substrate.

Belongs to the type III pantothenate kinase family. As to quaternary structure, homodimer. It depends on NH4(+) as a cofactor. Requires K(+) as cofactor.

The protein localises to the cytoplasm. It catalyses the reaction (R)-pantothenate + ATP = (R)-4'-phosphopantothenate + ADP + H(+). It participates in cofactor biosynthesis; coenzyme A biosynthesis; CoA from (R)-pantothenate: step 1/5. Functionally, catalyzes the phosphorylation of pantothenate (Pan), the first step in CoA biosynthesis. The polypeptide is Type III pantothenate kinase (Psychrobacter arcticus (strain DSM 17307 / VKM B-2377 / 273-4)).